Reading from the N-terminus, the 266-residue chain is MKKLTQAFLRFCLRFLQLLSLVLVLPVFVLMLISSLISAKNYESIPENYPPEIRFKKVYRLVSLFLYIKGVKVVIVNPENVPKKAVLVVANHKSNLDPLILIKAFGKTEGVPPLTFIAKIELQDTWLFKIMKLIDCVFIDRKNLRQMAASLEQQQQIIRQGTALCVFPEGTRVLSRQIGEFKSGALKVAYNAFVPIVPLTIVGSMGHMESKKRLQKAQVERDRGYKIQVIFNTPINPINFNQIDSQNVANNVWREISQTYAQYCQD.

The HXXXXD motif signature appears at 92–97; it reads HKSNLD.

The protein belongs to the 1-acyl-sn-glycerol-3-phosphate acyltransferase family.

It carries out the reaction a 1-acyl-sn-glycero-3-phosphate + an acyl-CoA = a 1,2-diacyl-sn-glycero-3-phosphate + CoA. Its pathway is phospholipid metabolism; CDP-diacylglycerol biosynthesis; CDP-diacylglycerol from sn-glycerol 3-phosphate: step 2/3. Functionally, converts lysophosphatidic acid (LPA) into phosphatidic acid by incorporating acyl moiety at the 2 position. This chain is Probable 1-acyl-sn-glycerol-3-phosphate acyltransferase (plsC), found in Mycoplasma pneumoniae (strain ATCC 29342 / M129 / Subtype 1) (Mycoplasmoides pneumoniae).